The following is a 330-amino-acid chain: GTPase Obg (330 aa).

One can recognise an Obg domain in the interval 1–159 (MNFIDEVKIY…MWIHLSLKLL (159 aa)). The region spanning 160–327 (SDVGLVGLPN…IVKLALKIIK (168 aa)) is the OBG-type G domain. GTP is bound by residues 166 to 173 (GLPNAGKS), 191 to 195 (FTTLV), 212 to 215 (DIPG), 279 to 282 (NKCD), and 308 to 310 (STY). Mg(2+) contacts are provided by serine 173 and threonine 193.

It belongs to the TRAFAC class OBG-HflX-like GTPase superfamily. OBG GTPase family. As to quaternary structure, monomer. Mg(2+) is required as a cofactor.

The protein resides in the cytoplasm. Functionally, an essential GTPase which binds GTP, GDP and possibly (p)ppGpp with moderate affinity, with high nucleotide exchange rates and a fairly low GTP hydrolysis rate. Plays a role in control of the cell cycle, stress response, ribosome biogenesis and in those bacteria that undergo differentiation, in morphogenesis control. This Rickettsia akari (strain Hartford) protein is GTPase Obg.